The chain runs to 144 residues: Arginine decarboxylase proenzyme (144 aa).

Ser-80 acts as the Schiff-base intermediate with substrate; via pyruvic acid in catalysis. Residue Ser-80 is modified to Pyruvic acid (Ser); by autocatalysis. The Proton acceptor; for processing activity role is filled by His-85. Cys-100 acts as the Proton donor; for catalytic activity in catalysis.

The protein belongs to the prokaryotic AdoMetDC family. Type 1 subfamily. As to quaternary structure, heterooctamer of four alpha and four beta chains arranged as a tetramer of alpha/beta heterodimers. It depends on pyruvate as a cofactor. Is synthesized initially as an inactive proenzyme. Formation of the active enzyme involves a self-maturation process in which the active site pyruvoyl group is generated from an internal serine residue via an autocatalytic post-translational modification. Two non-identical subunits are generated from the proenzyme in this reaction, and the pyruvate is formed at the N-terminus of the alpha chain, which is derived from the carboxyl end of the proenzyme. The post-translation cleavage follows an unusual pathway, termed non-hydrolytic serinolysis, in which the side chain hydroxyl group of the serine supplies its oxygen atom to form the C-terminus of the beta chain, while the remainder of the serine residue undergoes an oxidative deamination to produce ammonia and the pyruvoyl group blocking the N-terminus of the alpha chain.

The catalysed reaction is L-arginine + H(+) = agmatine + CO2. It participates in amine and polyamine biosynthesis; agmatine biosynthesis; agmatine from L-arginine: step 1/1. Specifically catalyzes the decarboxylation of L-arginine to agmatine. Has no S-adenosylmethionine decarboxylase (AdoMetDC) activity. The sequence is that of Arginine decarboxylase proenzyme from Ignicoccus hospitalis (strain KIN4/I / DSM 18386 / JCM 14125).